We begin with the raw amino-acid sequence, 242 residues long: Caffeoyl-CoA O-methyltransferase 3 (242 aa).

Lys-16 is a substrate binding site. Residues Thr-58, Glu-80, 82-83 (GV), Ser-88, Asp-106, and Ala-135 each bind S-adenosyl-L-methionine. Asp-158 contributes to the substrate binding site. Asp-158 is a binding site for a divalent metal cation. Asp-160 is an S-adenosyl-L-methionine binding site. Residues Asp-184 and Asn-185 each coordinate a divalent metal cation. Asn-189 is a substrate binding site.

It belongs to the class I-like SAM-binding methyltransferase superfamily. Cation-dependent O-methyltransferase family. CCoAMT subfamily. Mg(2+) is required as a cofactor. In terms of tissue distribution, mostly expressed in the bottom and middle parts of the stems.

It catalyses the reaction (E)-caffeoyl-CoA + S-adenosyl-L-methionine = (E)-feruloyl-CoA + S-adenosyl-L-homocysteine + H(+). The protein operates within aromatic compound metabolism; phenylpropanoid biosynthesis. Its function is as follows. Methylates caffeoyl-CoA to feruloyl-CoA and 5-hydroxyferuloyl-CoA to sinapoyl-CoA. Plays a role in the synthesis of feruloylated polysaccharides. Involved in the reinforcement of the plant cell wall. Also involved in the responding to wounding or pathogen challenge by the increased formation of cell wall-bound ferulic acid polymers. Also methylates free caffeic and 5-hydroxyferulic acids. This chain is Caffeoyl-CoA O-methyltransferase 3 (CCOAOMT3), found in Nicotiana tabacum (Common tobacco).